The chain runs to 657 residues: UvrABC system protein B (657 aa).

Residues 23–414 (KSIKKGNKYQ…KENIFHQIMR (392 aa)) form the Helicase ATP-binding domain. Residue 36–43 (GVTGSGKT) coordinates ATP. Residues 89-112 (YYDYYQPEAYIPRTDVFIEKDSST) carry the Beta-hairpin motif. The Helicase C-terminal domain maps to 431 to 593 (QVEILFDEAK…ITPTSVKRHI (163 aa)). Positions 622–657 (AKLVKELRKQMLEAAKALEFEKAAAIRDEINKLRDL) constitute a UVR domain.

This sequence belongs to the UvrB family. As to quaternary structure, forms a heterotetramer with UvrA during the search for lesions. Interacts with UvrC in an incision complex.

It localises to the cytoplasm. Functionally, the UvrABC repair system catalyzes the recognition and processing of DNA lesions. A damage recognition complex composed of 2 UvrA and 2 UvrB subunits scans DNA for abnormalities. Upon binding of the UvrA(2)B(2) complex to a putative damaged site, the DNA wraps around one UvrB monomer. DNA wrap is dependent on ATP binding by UvrB and probably causes local melting of the DNA helix, facilitating insertion of UvrB beta-hairpin between the DNA strands. Then UvrB probes one DNA strand for the presence of a lesion. If a lesion is found the UvrA subunits dissociate and the UvrB-DNA preincision complex is formed. This complex is subsequently bound by UvrC and the second UvrB is released. If no lesion is found, the DNA wraps around the other UvrB subunit that will check the other stand for damage. This chain is UvrABC system protein B, found in Campylobacter jejuni subsp. jejuni serotype O:2 (strain ATCC 700819 / NCTC 11168).